The following is a 259-amino-acid chain: Type III pantothenate kinase (259 aa).

Residue 9–16 participates in ATP binding; sequence DAGNSRIK. Residues tyrosine 93 and 100–103 each bind substrate; that span reads GSDR. The active-site Proton acceptor is aspartate 102. Threonine 126 is an ATP binding site. Threonine 190 serves as a coordination point for substrate.

The protein belongs to the type III pantothenate kinase family. Homodimer. NH4(+) serves as cofactor. Requires K(+) as cofactor.

The protein resides in the cytoplasm. The enzyme catalyses (R)-pantothenate + ATP = (R)-4'-phosphopantothenate + ADP + H(+). Its pathway is cofactor biosynthesis; coenzyme A biosynthesis; CoA from (R)-pantothenate: step 1/5. In terms of biological role, catalyzes the phosphorylation of pantothenate (Pan), the first step in CoA biosynthesis. This Burkholderia thailandensis (strain ATCC 700388 / DSM 13276 / CCUG 48851 / CIP 106301 / E264) protein is Type III pantothenate kinase.